The primary structure comprises 500 residues: Probable serine carboxypeptidase CPVL (500 aa).

Residues Met1–Ser23 form the signal peptide. N-linked (GlcNAc...) asparagine glycosylation is found at Asn110 and Asn161. Residue Ser233 is part of the active site. 2 N-linked (GlcNAc...) asparagine glycosylation sites follow: Asn333 and Asn360. Residues Asp414 and His474 contribute to the active site.

The protein belongs to the peptidase S10 family.

Its subcellular location is the secreted. Functionally, may be involved in the digestion of phagocytosed particles in the lysosome, participation in an inflammatory protease cascade, and trimming of peptides for antigen presentation. The chain is Probable serine carboxypeptidase CPVL (cpvl) from Dictyostelium discoideum (Social amoeba).